The primary structure comprises 365 residues: UDP-N-acetylglucosamine--N-acetylmuramyl-(pentapeptide) pyrophosphoryl-undecaprenol N-acetylglucosamine transferase (365 aa).

UDP-N-acetyl-alpha-D-glucosamine contacts are provided by residues 19 to 21, Asn131, Arg170, Ser201, Ile255, 274 to 279, and Gln300; these read TGG and ALTVTE.

The protein belongs to the glycosyltransferase 28 family. MurG subfamily.

It is found in the cell inner membrane. It carries out the reaction di-trans,octa-cis-undecaprenyl diphospho-N-acetyl-alpha-D-muramoyl-L-alanyl-D-glutamyl-meso-2,6-diaminopimeloyl-D-alanyl-D-alanine + UDP-N-acetyl-alpha-D-glucosamine = di-trans,octa-cis-undecaprenyl diphospho-[N-acetyl-alpha-D-glucosaminyl-(1-&gt;4)]-N-acetyl-alpha-D-muramoyl-L-alanyl-D-glutamyl-meso-2,6-diaminopimeloyl-D-alanyl-D-alanine + UDP + H(+). It functions in the pathway cell wall biogenesis; peptidoglycan biosynthesis. Functionally, cell wall formation. Catalyzes the transfer of a GlcNAc subunit on undecaprenyl-pyrophosphoryl-MurNAc-pentapeptide (lipid intermediate I) to form undecaprenyl-pyrophosphoryl-MurNAc-(pentapeptide)GlcNAc (lipid intermediate II). The chain is UDP-N-acetylglucosamine--N-acetylmuramyl-(pentapeptide) pyrophosphoryl-undecaprenol N-acetylglucosamine transferase from Acinetobacter baumannii (strain ACICU).